Here is a 343-residue protein sequence, read N- to C-terminus: Protein RecA (343 aa).

Glycine 66–threonine 73 contributes to the ATP binding site.

This sequence belongs to the RecA family.

The protein resides in the cytoplasm. Its function is as follows. Can catalyze the hydrolysis of ATP in the presence of single-stranded DNA, the ATP-dependent uptake of single-stranded DNA by duplex DNA, and the ATP-dependent hybridization of homologous single-stranded DNAs. It interacts with LexA causing its activation and leading to its autocatalytic cleavage. This is Protein RecA from Rickettsia africae (strain ESF-5).